A 179-amino-acid chain; its full sequence is ATP synthase subunit delta (179 aa).

This sequence belongs to the ATPase delta chain family. As to quaternary structure, F-type ATPases have 2 components, F(1) - the catalytic core - and F(0) - the membrane proton channel. F(1) has five subunits: alpha(3), beta(3), gamma(1), delta(1), epsilon(1). F(0) has three main subunits: a(1), b(2) and c(10-14). The alpha and beta chains form an alternating ring which encloses part of the gamma chain. F(1) is attached to F(0) by a central stalk formed by the gamma and epsilon chains, while a peripheral stalk is formed by the delta and b chains.

The protein resides in the cell inner membrane. Its function is as follows. F(1)F(0) ATP synthase produces ATP from ADP in the presence of a proton or sodium gradient. F-type ATPases consist of two structural domains, F(1) containing the extramembraneous catalytic core and F(0) containing the membrane proton channel, linked together by a central stalk and a peripheral stalk. During catalysis, ATP synthesis in the catalytic domain of F(1) is coupled via a rotary mechanism of the central stalk subunits to proton translocation. This protein is part of the stalk that links CF(0) to CF(1). It either transmits conformational changes from CF(0) to CF(1) or is implicated in proton conduction. The polypeptide is ATP synthase subunit delta (Cupriavidus pinatubonensis (strain JMP 134 / LMG 1197) (Cupriavidus necator (strain JMP 134))).